The following is a 95-amino-acid chain: Histone-like DNA-binding protein (95 aa).

It belongs to the bacterial histone-like protein family.

In Rickettsia montanensis, this protein is Histone-like DNA-binding protein.